We begin with the raw amino-acid sequence, 85 residues long: Cytochrome b (85 aa).

Transmembrane regions (helical) follow at residues Leu-1–Met-8, Trp-32–Ile-53, and Trp-68–Gly-85. Positions 38 and 52 each coordinate heme b.

Belongs to the cytochrome b family. As to quaternary structure, the cytochrome bc1 complex contains 3 respiratory subunits (MT-CYB, CYC1 and UQCRFS1), 2 core proteins (UQCRC1 and UQCRC2) and probably 6 low-molecular weight proteins. Heme b is required as a cofactor.

It localises to the mitochondrion inner membrane. In terms of biological role, component of the ubiquinol-cytochrome c reductase complex (complex III or cytochrome b-c1 complex) that is part of the mitochondrial respiratory chain. The b-c1 complex mediates electron transfer from ubiquinol to cytochrome c. Contributes to the generation of a proton gradient across the mitochondrial membrane that is then used for ATP synthesis. In Pomoxis nigromaculatus (Black crappie), this protein is Cytochrome b (mt-cyb).